Consider the following 334-residue polypeptide: N-chimaerin (334 aa).

Polar residues predominate over residues 1-10; it reads MPSKESWSGR. The disordered stretch occupies residues 1-22; sequence MPSKESWSGRKTNRATVHKSKQ. Thr-67 is subject to Phosphothreonine. Residues 80–130 form a Phorbol-ester/DAG-type zinc finger; that stretch reads VHNFKVHTFRGPHWCEYCANFMWGLIAQGVKCADCGLNVHKQCSKMVPNDC. Residues 143–334 form the Rho-GAP domain; sequence CDLTTLVKAH…LLIKNEDILF (192 aa). The residue at position 215 (Thr-215) is a Phosphothreonine.

As to quaternary structure, interacts with EPHA4; effector of EPHA4 in axon guidance linking EPHA4 activation to RAC1 regulation. In terms of processing, phosphorylated. Phosphorylation is EPHA4 kinase activity-dependent. As to expression, in neurons in brain regions that are involved in learning and memory processes.

Its function is as follows. GTPase-activating protein for p21-rac and a phorbol ester receptor. Involved in the assembly of neuronal locomotor circuits as a direct effector of EPHA4 in axon guidance. The protein is N-chimaerin (Chn1) of Rattus norvegicus (Rat).